A 280-amino-acid polypeptide reads, in one-letter code: MEREISALYEPKRNNEIRIFESSDEMSTDLAEYISQVSEISVKERGYFAIALSGGPLVSFLGKLCEAPYNKTLDWSKWYIFWSDERAVAKNHAESNYRITKEGFLSKVPILNGHVYSINDNATVEDAATDYEFVIRQLVKVRTIGVSESNDCPKFDLILLSMGSDGHVASLFPNHPSLELKDDWITYITDSPQPPPERITFTLPVINSASNIAIVTTGDDKSEAVHLAISDNADGPEAPSSLPARMVQPTDGKLVWFLDKSAASSLDAENDDAFEQHREY.

Belongs to the glucosamine/galactosamine-6-phosphate isomerase family. 6-phosphogluconolactonase subfamily.

The catalysed reaction is 6-phospho-D-glucono-1,5-lactone + H2O = 6-phospho-D-gluconate + H(+). It functions in the pathway carbohydrate degradation; pentose phosphate pathway; D-ribulose 5-phosphate from D-glucose 6-phosphate (oxidative stage): step 2/3. In terms of biological role, hydrolysis of 6-phosphogluconolactone to 6-phosphogluconate. The chain is Probable 6-phosphogluconolactonase 2 from Oryza sativa subsp. indica (Rice).